The sequence spans 266 residues: Ribosomal RNA small subunit methyltransferase J (266 aa).

S-adenosyl-L-methionine contacts are provided by residues 109 to 110, 125 to 126, and Asp185; these read RD and ER.

It belongs to the methyltransferase superfamily. RsmJ family.

It is found in the cytoplasm. It catalyses the reaction guanosine(1516) in 16S rRNA + S-adenosyl-L-methionine = N(2)-methylguanosine(1516) in 16S rRNA + S-adenosyl-L-homocysteine + H(+). Specifically methylates the guanosine in position 1516 of 16S rRNA. This chain is Ribosomal RNA small subunit methyltransferase J, found in Cellvibrio japonicus (strain Ueda107) (Pseudomonas fluorescens subsp. cellulosa).